The sequence spans 198 residues: tRNA (pseudouridine(54)-N(1))-methyltransferase (198 aa).

The S-adenosyl-L-methionine site is built by L134 and G155.

Belongs to the methyltransferase superfamily. TrmY family. In terms of assembly, homodimer.

Its subcellular location is the cytoplasm. The catalysed reaction is pseudouridine(54) in tRNA + S-adenosyl-L-methionine = N(1)-methylpseudouridine(54) in tRNA + S-adenosyl-L-homocysteine + H(+). Specifically catalyzes the N1-methylation of pseudouridine at position 54 (Psi54) in tRNAs. This Thermococcus kodakarensis (strain ATCC BAA-918 / JCM 12380 / KOD1) (Pyrococcus kodakaraensis (strain KOD1)) protein is tRNA (pseudouridine(54)-N(1))-methyltransferase.